A 199-amino-acid polypeptide reads, in one-letter code: Recombination protein RecR (199 aa).

The C4-type zinc-finger motif lies at Cys57–Cys72. In terms of domain architecture, Toprim spans Ser80–Pro175.

The protein belongs to the RecR family.

May play a role in DNA repair. It seems to be involved in an RecBC-independent recombinational process of DNA repair. It may act with RecF and RecO. This is Recombination protein RecR from Rickettsia canadensis (strain McKiel).